Reading from the N-terminus, the 382-residue chain is uncharacterized protein (382 aa).

The next 12 helical transmembrane spans lie at 14–34, 45–65, 79–99, 102–122, 131–151, 157–177, 204–224, 235–255, 270–290, 291–311, 325–345, and 348–368; these read GLLL…LWLA, VVSS…GYVI, FIFA…SWLA, FVAG…LMCS, LLAA…LLVS, LMSV…PLLF, LGVN…GLMP, ASIG…QWPI, VQVF…AMAP, ALFI…AWAC, ALLL…AMLM, and FSDN…LLML.

This sequence belongs to the major facilitator superfamily. YcaD (TC 2.A.1.26) family.

It localises to the cell inner membrane. This is an uncharacterized protein from Escherichia coli O45:K1 (strain S88 / ExPEC).